Reading from the N-terminus, the 506-residue chain is RNA2 polyprotein (506 aa).

This sequence belongs to the nepoviruses RNA2 polyprotein family. Specific enzymatic cleavages in vivo by the P1 encoded 3C-like protease yield mature proteins.

It is found in the host cell junction. The protein localises to the host plasmodesma. It localises to the virion. In terms of biological role, the movement protein is assembled into tubules that allow the transport of virions from cell to cell. The sequence is that of RNA2 polyprotein from Beta vulgaris subsp. vulgaris (Beet).